A 216-amino-acid chain; its full sequence is Ras-related protein Rab11A (216 aa).

Residues 19-27 (GDSGVGKSN), 38-44 (CLESKST), 67-71 (DTAGQ), 125-128 (NKSD), and 155-157 (SAL) contribute to the GTP site. The Effector region signature appears at 41-49 (SKSTIGVEF). Residues cysteine 213 and cysteine 214 are each lipidated (S-geranylgeranyl cysteine).

This sequence belongs to the small GTPase superfamily. Rab family.

Its subcellular location is the cell membrane. The sequence is that of Ras-related protein Rab11A (RAB11A) from Nicotiana tabacum (Common tobacco).